Reading from the N-terminus, the 140-residue chain is TPT1-like protein (140 aa).

One can recognise a TCTP domain in the interval 6-140 (MITYWDLISH…LANFKNYQKT (135 aa)).

The protein belongs to the TCTP family.

In Homo sapiens (Human), this protein is TPT1-like protein.